A 311-amino-acid polypeptide reads, in one-letter code: 4-diphosphocytidyl-2-C-methyl-D-erythritol kinase (311 aa).

K16 is an active-site residue. 100-110 contacts ATP; that stretch reads PIGAGLAGGSS. The active site involves D142.

Belongs to the GHMP kinase family. IspE subfamily.

It catalyses the reaction 4-CDP-2-C-methyl-D-erythritol + ATP = 4-CDP-2-C-methyl-D-erythritol 2-phosphate + ADP + H(+). It functions in the pathway isoprenoid biosynthesis; isopentenyl diphosphate biosynthesis via DXP pathway; isopentenyl diphosphate from 1-deoxy-D-xylulose 5-phosphate: step 3/6. In terms of biological role, catalyzes the phosphorylation of the position 2 hydroxy group of 4-diphosphocytidyl-2C-methyl-D-erythritol. The polypeptide is 4-diphosphocytidyl-2-C-methyl-D-erythritol kinase (Prochlorococcus marinus (strain MIT 9215)).